The chain runs to 486 residues: Kynureninase 1 (486 aa).

The tract at residues 53 to 72 (DLKRTTLDPNQEPEHSPTPS) is disordered. Pyridoxal 5'-phosphate contacts are provided by residues L146, T147, 174 to 177 (FPSD), S231, D260, H263, and Y285. K286 carries the post-translational modification N6-(pyridoxal phosphate)lysine. Pyridoxal 5'-phosphate contacts are provided by W326 and N354.

Belongs to the kynureninase family. Homodimer. Pyridoxal 5'-phosphate is required as a cofactor.

Its subcellular location is the cytoplasm. The catalysed reaction is L-kynurenine + H2O = anthranilate + L-alanine + H(+). The enzyme catalyses 3-hydroxy-L-kynurenine + H2O = 3-hydroxyanthranilate + L-alanine + H(+). It participates in amino-acid degradation; L-kynurenine degradation; L-alanine and anthranilate from L-kynurenine: step 1/1. The protein operates within cofactor biosynthesis; NAD(+) biosynthesis; quinolinate from L-kynurenine: step 2/3. Its function is as follows. Catalyzes the cleavage of L-kynurenine (L-Kyn) and L-3-hydroxykynurenine (L-3OHKyn) into anthranilic acid (AA) and 3-hydroxyanthranilic acid (3-OHAA), respectively. The protein is Kynureninase 1 (bna5-1) of Aspergillus clavatus (strain ATCC 1007 / CBS 513.65 / DSM 816 / NCTC 3887 / NRRL 1 / QM 1276 / 107).